The primary structure comprises 674 residues: tRNA-guanine(15) transglycosylase (674 aa).

Catalysis depends on D90, which acts as the Nucleophile. D125 and A192 together coordinate substrate. The Zn(2+) site is built by C275, C277, and C280. A PUA domain is found at 596-671 (HNRVVVSEDS…QAIKTRKWKK (76 aa)).

Belongs to the archaeosine tRNA-ribosyltransferase family. Zn(2+) serves as cofactor.

It catalyses the reaction guanosine(15) in tRNA + 7-cyano-7-deazaguanine = 7-cyano-7-carbaguanosine(15) in tRNA + guanine. It functions in the pathway tRNA modification; archaeosine-tRNA biosynthesis. In terms of biological role, exchanges the guanine residue with 7-cyano-7-deazaguanine (preQ0) at position 15 in the dihydrouridine loop (D-loop) of archaeal tRNAs. In Methanosphaera stadtmanae (strain ATCC 43021 / DSM 3091 / JCM 11832 / MCB-3), this protein is tRNA-guanine(15) transglycosylase.